A 200-amino-acid polypeptide reads, in one-letter code: MVNKNSPKTIDRIILGVDPGTNVMGYGLIAIKGTQLTLIQFGVIHLSKYTDHAIKLSKIFERISLLIEEYHPDEMAIEAPFFGSNVQSMLKLGRAQGVAIAAAISKQVPIFEYAPKKIKQSVTGSGNASKEQVAAMLSKILFFQEIPKLLDATDALGVAVCHYFQKGDVKKSKGGWNNFIKENPDKVKTVPAKISKKKTD.

Catalysis depends on residues Asp-18, Glu-78, and Asp-151. Residues Asp-18, Glu-78, and Asp-151 each contribute to the Mg(2+) site.

This sequence belongs to the RuvC family. As to quaternary structure, homodimer which binds Holliday junction (HJ) DNA. The HJ becomes 2-fold symmetrical on binding to RuvC with unstacked arms; it has a different conformation from HJ DNA in complex with RuvA. In the full resolvosome a probable DNA-RuvA(4)-RuvB(12)-RuvC(2) complex forms which resolves the HJ. The cofactor is Mg(2+).

It is found in the cytoplasm. The catalysed reaction is Endonucleolytic cleavage at a junction such as a reciprocal single-stranded crossover between two homologous DNA duplexes (Holliday junction).. Its function is as follows. The RuvA-RuvB-RuvC complex processes Holliday junction (HJ) DNA during genetic recombination and DNA repair. Endonuclease that resolves HJ intermediates. Cleaves cruciform DNA by making single-stranded nicks across the HJ at symmetrical positions within the homologous arms, yielding a 5'-phosphate and a 3'-hydroxyl group; requires a central core of homology in the junction. The consensus cleavage sequence is 5'-(A/T)TT(C/G)-3'. Cleavage occurs on the 3'-side of the TT dinucleotide at the point of strand exchange. HJ branch migration catalyzed by RuvA-RuvB allows RuvC to scan DNA until it finds its consensus sequence, where it cleaves and resolves the cruciform DNA. This is Crossover junction endodeoxyribonuclease RuvC from Cytophaga hutchinsonii (strain ATCC 33406 / DSM 1761 / CIP 103989 / NBRC 15051 / NCIMB 9469 / D465).